Reading from the N-terminus, the 202-residue chain is ATP-dependent Clp protease proteolytic subunit (202 aa).

Residue Ser106 is the Nucleophile of the active site. His131 is an active-site residue.

This sequence belongs to the peptidase S14 family. As to quaternary structure, fourteen ClpP subunits assemble into 2 heptameric rings which stack back to back to give a disk-like structure with a central cavity, resembling the structure of eukaryotic proteasomes.

It localises to the cytoplasm. The enzyme catalyses Hydrolysis of proteins to small peptides in the presence of ATP and magnesium. alpha-casein is the usual test substrate. In the absence of ATP, only oligopeptides shorter than five residues are hydrolyzed (such as succinyl-Leu-Tyr-|-NHMec, and Leu-Tyr-Leu-|-Tyr-Trp, in which cleavage of the -Tyr-|-Leu- and -Tyr-|-Trp bonds also occurs).. Its function is as follows. Cleaves peptides in various proteins in a process that requires ATP hydrolysis. Has a chymotrypsin-like activity. Plays a major role in the degradation of misfolded proteins. The protein is ATP-dependent Clp protease proteolytic subunit of Albidiferax ferrireducens (strain ATCC BAA-621 / DSM 15236 / T118) (Rhodoferax ferrireducens).